A 303-amino-acid polypeptide reads, in one-letter code: Cytosolic-abundant heat soluble protein 3 (303 aa).

Low complexity predominate over residues 1–19; that stretch reads MSSRQNQQSSSQHSSSSQQ. The disordered stretch occupies residues 1 to 67; the sequence is MSSRQNQQSS…PGSHSEVHEE (67 aa). Residues 170 to 257 are a coiled coil; it reads ARQDEQDAGM…ESAKAQTNVN (88 aa). CAHS motif regions lie at residues 184 to 202 and 221 to 239; these read YREE…LERQ and QERE…LELE. Over residues 270–280 the composition is skewed to polar residues; the sequence is KGAIQTSADKS. The tract at residues 270–303 is disordered; sequence KGAIQTSADKSSTTKTGPTTVTQIKHTEQHTERR. The span at 282 to 291 shows a compositional bias: low complexity; the sequence is TTKTGPTTVT. The span at 294–303 shows a compositional bias: basic and acidic residues; it reads KHTEQHTERR.

Belongs to the Cytosolic-abundant heat soluble protein (CAHS) family.

It is found in the cytoplasm. Functionally, CAHS proteins are cytosolic heat soluble proteins that seem to contribute to the anhydrobiosis in tardigrades, but their specific mechanisms are yet to be identified. It is possible that protection during anhydrobiosis might occur via the stabilization of vitrifying small molecules such as sugars, but not via the direct glass transition of CAHS proteins themselves. This Ramazzottius varieornatus (Water bear) protein is Cytosolic-abundant heat soluble protein 3.